The sequence spans 658 residues: Protein CFAP20DC (658 aa).

Disordered regions lie at residues 312–522 (QQGE…EEEY) and 589–634 (PVNQ…LDSS). Over residues 319–328 (SHPVKQTTPL) the composition is skewed to polar residues. Positions 339-349 (PPRDPSADKGS) are enriched in basic and acidic residues. Low complexity-rich tracts occupy residues 351–363 (RRGL…SGSR) and 417–434 (SSGP…LLLD). Over residues 494 to 506 (DPKEDSRVTKGDT) the composition is skewed to basic and acidic residues. Acidic residues predominate over residues 507–521 (ELEDDFYGSDSSEEE). Residues 625–634 (QPLEQSLDSS) are compositionally biased toward polar residues.

The polypeptide is Protein CFAP20DC (Rattus norvegicus (Rat)).